The chain runs to 297 residues: Homoserine kinase (297 aa).

Residue 82–92 (PVSRGLGSSAA) coordinates ATP.

This sequence belongs to the GHMP kinase family. Homoserine kinase subfamily.

It is found in the cytoplasm. It carries out the reaction L-homoserine + ATP = O-phospho-L-homoserine + ADP + H(+). It functions in the pathway amino-acid biosynthesis; L-threonine biosynthesis; L-threonine from L-aspartate: step 4/5. In terms of biological role, catalyzes the ATP-dependent phosphorylation of L-homoserine to L-homoserine phosphate. This Clostridium botulinum (strain ATCC 19397 / Type A) protein is Homoserine kinase.